Reading from the N-terminus, the 556-residue chain is Double-strand-break repair protein rad21-like protein 1 (556 aa).

It belongs to the rad21 family. In terms of assembly, component of some meiotic cohesin complex composed of the SMC1 (SMC1A or SMC1B) and SMC3 heterodimer attached via their hinge domain, RAD21L which link them, and STAG3.

Its subcellular location is the nucleus. The protein resides in the chromosome. Functionally, meiosis-specific component of some cohesin complex required during the initial steps of prophase I in male meiosis. Probably required during early meiosis in males for separation of sister chromatids and homologous chromosomes. Replaces RAD21 in premeiotic S phase (during early stages of prophase I), while RAD21 reappears in later stages of prophase I. Involved in synaptonemal complex assembly, synapsis initiation and crossover recombination between homologous chromosomes during prophase I. The protein is Double-strand-break repair protein rad21-like protein 1 (RAD21L1) of Homo sapiens (Human).